Here is a 220-residue protein sequence, read N- to C-terminus: Octanoyltransferase (220 aa).

One can recognise a BPL/LPL catalytic domain in the interval 31–217 (ENTPDEIWLV…HFAEILGYNA (187 aa)). Substrate-binding positions include 70–77 (RGGQITYH), 146–148 (SLG), and 159–161 (GLA). Cys-177 acts as the Acyl-thioester intermediate in catalysis.

Belongs to the LipB family.

The protein resides in the cytoplasm. The catalysed reaction is octanoyl-[ACP] + L-lysyl-[protein] = N(6)-octanoyl-L-lysyl-[protein] + holo-[ACP] + H(+). It functions in the pathway protein modification; protein lipoylation via endogenous pathway; protein N(6)-(lipoyl)lysine from octanoyl-[acyl-carrier-protein]: step 1/2. Catalyzes the transfer of endogenously produced octanoic acid from octanoyl-acyl-carrier-protein onto the lipoyl domains of lipoate-dependent enzymes. Lipoyl-ACP can also act as a substrate although octanoyl-ACP is likely to be the physiological substrate. The chain is Octanoyltransferase from Actinobacillus succinogenes (strain ATCC 55618 / DSM 22257 / CCUG 43843 / 130Z).